A 428-amino-acid polypeptide reads, in one-letter code: Tyrosine--tRNA ligase (428 aa).

Tyr-41 serves as a coordination point for L-tyrosine. Positions 46 to 55 (PTADSLHLGH) match the 'HIGH' region motif. L-tyrosine contacts are provided by Tyr-179 and Gln-183. The 'KMSKS' region signature appears at 239–243 (KFGKT). Lys-242 provides a ligand contact to ATP. An S4 RNA-binding domain is found at 361-418 (ADLLQALVDSELQPSRGQARKTVASNAVTINGEKQADPEYVFSDSDRLFGRYTLLRRG).

Belongs to the class-I aminoacyl-tRNA synthetase family. TyrS type 1 subfamily. Homodimer.

Its subcellular location is the cytoplasm. The catalysed reaction is tRNA(Tyr) + L-tyrosine + ATP = L-tyrosyl-tRNA(Tyr) + AMP + diphosphate + H(+). Functionally, catalyzes the attachment of tyrosine to tRNA(Tyr) in a two-step reaction: tyrosine is first activated by ATP to form Tyr-AMP and then transferred to the acceptor end of tRNA(Tyr). The protein is Tyrosine--tRNA ligase of Klebsiella pneumoniae subsp. pneumoniae (strain ATCC 700721 / MGH 78578).